Reading from the N-terminus, the 240-residue chain is Ubiquinone biosynthesis O-methyltransferase (240 aa).

S-adenosyl-L-methionine contacts are provided by arginine 44, glycine 64, aspartate 85, and methionine 129.

The protein belongs to the methyltransferase superfamily. UbiG/COQ3 family.

The enzyme catalyses a 3-demethylubiquinol + S-adenosyl-L-methionine = a ubiquinol + S-adenosyl-L-homocysteine + H(+). The catalysed reaction is a 3-(all-trans-polyprenyl)benzene-1,2-diol + S-adenosyl-L-methionine = a 2-methoxy-6-(all-trans-polyprenyl)phenol + S-adenosyl-L-homocysteine + H(+). Its pathway is cofactor biosynthesis; ubiquinone biosynthesis. In terms of biological role, O-methyltransferase that catalyzes the 2 O-methylation steps in the ubiquinone biosynthetic pathway. This Escherichia coli (strain ATCC 8739 / DSM 1576 / NBRC 3972 / NCIMB 8545 / WDCM 00012 / Crooks) protein is Ubiquinone biosynthesis O-methyltransferase.